Consider the following 258-residue polypeptide: Synaptosomal-associated protein 29 (258 aa).

Positions 1-41 (MSAYPKSYNPFDDDGEDEGARPAPWRDARDLPDGPDAPADR) are disordered. Residues 18–32 (EGARPAPWRDARDLP) are compositionally biased toward basic and acidic residues. Positions 76-107 (ASSEELARQRGVLERTEKMVDKMDQDLKISQK) form a coiled coil. Residues Ser-77, Ser-78, and Ser-114 each carry the phosphoserine modification. The disordered stretch occupies residues 127–190 (PVETPPEQNG…GSAVSTDAYP (64 aa)). Residues Thr-130 and Thr-137 each carry the phosphothreonine modification. The span at 132–144 (PEQNGTLASQPNS) shows a compositional bias: polar residues. Phosphoserine occurs at positions 163, 182, 185, 204, and 210. Positions 196 to 258 (QAYHQKIDSN…KSTERKVRQL (63 aa)) constitute a t-SNARE coiled-coil homology domain.

It belongs to the SNAP-25 family. In terms of assembly, forms a SNARE complex, composed of VAMP8, SNAP29 and STX17, involved in fusion of autophagosome with lysosome. Interacts with multiple syntaxins including STX6. Interacts with EIPR1. Interacts with STX17; this interaction is increased in the absence of TMEM39A.

Its subcellular location is the cytoplasm. It localises to the golgi apparatus membrane. The protein localises to the cytoplasmic vesicle. The protein resides in the autophagosome membrane. It is found in the cell projection. Its subcellular location is the cilium membrane. In terms of biological role, SNAREs, soluble N-ethylmaleimide-sensitive factor-attachment protein receptors, are essential proteins for fusion of cellular membranes. SNAREs localized on opposing membranes assemble to form a trans-SNARE complex, an extended, parallel four alpha-helical bundle that drives membrane fusion. SNAP29 is a SNARE involved in autophagy through the direct control of autophagosome membrane fusion with the lysososome membrane. Also plays a role in ciliogenesis by regulating membrane fusions. This chain is Synaptosomal-associated protein 29, found in Pongo abelii (Sumatran orangutan).